The chain runs to 126 residues: Small ribosomal subunit protein uS13 (126 aa).

A disordered region spans residues 94–126; it reads RGLPVHGQRTSTNARTRKGPRRAIAGKKKPGKK. Residues 108-126 are compositionally biased toward basic residues; the sequence is RTRKGPRRAIAGKKKPGKK.

Belongs to the universal ribosomal protein uS13 family. In terms of assembly, part of the 30S ribosomal subunit. Forms a loose heterodimer with protein S19. Forms two bridges to the 50S subunit in the 70S ribosome.

Functionally, located at the top of the head of the 30S subunit, it contacts several helices of the 16S rRNA. In the 70S ribosome it contacts the 23S rRNA (bridge B1a) and protein L5 of the 50S subunit (bridge B1b), connecting the 2 subunits; these bridges are implicated in subunit movement. Contacts the tRNAs in the A and P-sites. The sequence is that of Small ribosomal subunit protein uS13 from Streptomyces avermitilis (strain ATCC 31267 / DSM 46492 / JCM 5070 / NBRC 14893 / NCIMB 12804 / NRRL 8165 / MA-4680).